Here is a 604-residue protein sequence, read N- to C-terminus: Protein CBFA2T1 (604 aa).

A disordered region spans residues 32 to 114 (TEKHSTMPDS…SSSSLANQQL (83 aa)). A Phosphoserine modification is found at serine 41. The span at 63–86 (QGAPRTSSFTPTTLTNGTSHSPTA) shows a compositional bias: polar residues. The span at 95 to 114 (NGFSNGPSSSSSSSLANQQL) shows a compositional bias: low complexity. The TAFH domain maps to 120-215 (ARQLSKLKRF…NPAQYLAQHE (96 aa)). A disordered region spans residues 230 to 298 (SELLLDVNEN…LPHPTPPPPQ (69 aa)). The span at 238–264 (ENGKRRTPDRTKENGFDREPLHSEHPS) shows a compositional bias: basic and acidic residues. Residues 271-285 (SPGQRYSPNNGLSYQ) show a composition bias toward polar residues. Over residues 289 to 298 (LPHPTPPPPQ) the composition is skewed to pro residues. Positions 337 to 383 (QEEMIDHRLTDREWAEEWKHLDHLLNCIMDMVEKTRRSLTVLRRCQE) are important for oligomerization. Residues 337 to 383 (QEEMIDHRLTDREWAEEWKHLDHLLNCIMDMVEKTRRSLTVLRRCQE) are nervy homology region 2 (NHR2). Positions 401-423 (DLKKGGGSSSSHSRQQSPVNPDP) are disordered. Serine 417 carries the phosphoserine modification. The nervy homology region 3 (NHR3) stretch occupies residues 443-492 (EEIWKKAEEAVNEVKRQAMTELQKAVSEAERKAHDMITTERAKMERTVAE). Zn(2+)-binding residues include cysteine 515, cysteine 518, cysteine 526, cysteine 529, cysteine 535, cysteine 539, histidine 547, and cysteine 551. The MYND-type zinc finger occupies 515–551 (CWNCGRKASETCSGCNTARYCGSFCQHKDWEKHHHIC). Polar residues predominate over residues 557–576 (AQQQGDTPAVSSSVTPNSGA). The disordered stretch occupies residues 557–604 (AQQQGDTPAVSSSVTPNSGAGSPMDTPPAATPRSTTPGTPSTIETTPR). Residues 587 to 604 (TPRSTTPGTPSTIETTPR) show a composition bias toward low complexity.

This sequence belongs to the CBFA2T family. As to quaternary structure, homooligomer. Homotetramerization is mediated by nervy homology region 2 (NRH2). Can interact with CBFA2T2 and CBFA2T3; heterotetramerization between members of the CBFA2T family is proposed. Interacts with TCF12, SIN3A, HDAC1, HDAC2, HDAC3, NCOR1, NCOR2. Interacts with ATN1 (via its N-terminus); the interaction enhances the transcriptional repression. Interacts (via its N-terminus) with ZBTB16; the interaction increases the transcription repression activity of ZBTB16. AML1-MTG8/ETO fusion protein interacts with CBFB. AML1-MTG8/ETO is part of a stable transcription factor complex AETFC in leukemic cells; AETFC formation seems to be involved in recruitment of EP300. AML1-MTG8/ETO nervy homology region 2-mediated oligomerization is proposed to be homotypic, required for AML1-MTG8/ETO-mediated transformation of primary hematopoietic cells and is required for AML1-MTG8/ETO interaction with TCF12. In terms of tissue distribution, most abundantly expressed in brain. Lower levels in lung, heart, testis and ovary.

The protein resides in the nucleus. Transcriptional corepressor which facilitates transcriptional repression via its association with DNA-binding transcription factors and recruitment of other corepressors and histone-modifying enzymes. Can repress the expression of MMP7 in a ZBTB33-dependent manner. Can repress transactivation mediated by TCF12. Acts as a negative regulator of adipogenesis. The AML1-MTG8/ETO fusion protein frequently found in leukemic cells is involved in leukemogenesis and contributes to hematopoietic stem/progenitor cell self-renewal. The protein is Protein CBFA2T1 (RUNX1T1) of Homo sapiens (Human).